The following is a 566-amino-acid chain: MVSSFPFVYQNMLAKRPYGAYQNVITVSMSWLKIHGSCPHRITDALHRNAQIIPVLEQWRQQGNQVNPSHVRVIIKKLRDSDQSLQALQVSEWMSKEKICNLIPEDFAARLHLIENVVGLEEAEKFFESIPKNARGDSVYTSLLNSYARSDKTLCKAEATFQKMRDLGLLLRPVPYNAMMSLYSALKNREKVEELLLEMKDNDVEADNVTVNNVLKLYSAVCDVTEMEKFLNKWEGIHGIKLEWHTTLDMAKAYLRARSSGKAMKMLRLTEQLVDQKSLKSAYDHLMKLYGEAGNREEVLRVWKLYKSKIGERDNNGYRTVIRSLLKVDDIVGAEEIYKVWESLPLEFDHRIPTMLASGYRDRGMTEKAEKLMNSKTIKDRRMNKPVTPLLEQWGDQMKPSDLKCLIKNLRDSKQFSKALQVSEWMGEKQVCNLYLEDYAARLYLTENVLGLEEAEKYFENIPENMKDYSVYVALLSSYAKSDKNLGNMVDEILREMEENNVDPDLITVNHVLKVYAAESKIQAMEMFMRRWGTEDGIKLERGTMIAMAKAYVKAGLTKKSGRGVW.

9 PPR repeats span residues Gly136–Leu171, Arg172–Ala206, Asp207–Leu242, Glu243–Leu273, Leu279–Lys309, Asp314–Phe348, Asp349–Lys385, Asp468–Pro504, and Asp505–Leu540.

This sequence belongs to the PPR family. P subfamily.

This chain is Putative pentatricopeptide repeat-containing protein At1g28020, found in Arabidopsis thaliana (Mouse-ear cress).